The sequence spans 425 residues: UPF0597 protein KPN78578_43500 (425 aa).

The protein belongs to the UPF0597 family.

The sequence is that of UPF0597 protein KPN78578_43500 from Klebsiella pneumoniae subsp. pneumoniae (strain ATCC 700721 / MGH 78578).